Consider the following 392-residue polypeptide: uncharacterized protein (392 aa).

Belongs to the peptidase M24 family.

This is an uncharacterized protein from Sinorhizobium fredii (strain NBRC 101917 / NGR234).